The primary structure comprises 370 residues: Putative agmatine deiminase (370 aa).

Cysteine 361 serves as the catalytic Amidino-cysteine intermediate.

Belongs to the agmatine deiminase family.

It catalyses the reaction agmatine + H2O = N-carbamoylputrescine + NH4(+). The polypeptide is Putative agmatine deiminase (Shewanella baltica (strain OS155 / ATCC BAA-1091)).